The following is a 63-amino-acid chain: Glutamine synthetase translation inhibitor (63 aa).

Inhibits the synthesis of glutamine synthetase II. The protein is Glutamine synthetase translation inhibitor (gstI) of Rhizobium leguminosarum.